The chain runs to 210 residues: Thiamine-phosphate synthase (210 aa).

4-amino-2-methyl-5-(diphosphooxymethyl)pyrimidine contacts are provided by residues 38–42 and Asn70; that span reads QLREK. The Mg(2+) site is built by Asp71 and Asp90. Ser109 contributes to the 4-amino-2-methyl-5-(diphosphooxymethyl)pyrimidine binding site. 139-141 lines the 2-[(2R,5Z)-2-carboxy-4-methylthiazol-5(2H)-ylidene]ethyl phosphate pocket; that stretch reads TPT. Lys142 is a binding site for 4-amino-2-methyl-5-(diphosphooxymethyl)pyrimidine. 2-[(2R,5Z)-2-carboxy-4-methylthiazol-5(2H)-ylidene]ethyl phosphate is bound by residues Gly170 and 190 to 191; that span reads VS.

Belongs to the thiamine-phosphate synthase family. Mg(2+) serves as cofactor.

It carries out the reaction 2-[(2R,5Z)-2-carboxy-4-methylthiazol-5(2H)-ylidene]ethyl phosphate + 4-amino-2-methyl-5-(diphosphooxymethyl)pyrimidine + 2 H(+) = thiamine phosphate + CO2 + diphosphate. The enzyme catalyses 2-(2-carboxy-4-methylthiazol-5-yl)ethyl phosphate + 4-amino-2-methyl-5-(diphosphooxymethyl)pyrimidine + 2 H(+) = thiamine phosphate + CO2 + diphosphate. The catalysed reaction is 4-methyl-5-(2-phosphooxyethyl)-thiazole + 4-amino-2-methyl-5-(diphosphooxymethyl)pyrimidine + H(+) = thiamine phosphate + diphosphate. Its pathway is cofactor biosynthesis; thiamine diphosphate biosynthesis; thiamine phosphate from 4-amino-2-methyl-5-diphosphomethylpyrimidine and 4-methyl-5-(2-phosphoethyl)-thiazole: step 1/1. In terms of biological role, condenses 4-methyl-5-(beta-hydroxyethyl)thiazole monophosphate (THZ-P) and 2-methyl-4-amino-5-hydroxymethyl pyrimidine pyrophosphate (HMP-PP) to form thiamine monophosphate (TMP). This chain is Thiamine-phosphate synthase, found in Leptospira biflexa serovar Patoc (strain Patoc 1 / Ames).